The following is a 267-amino-acid chain: Indole-3-glycerol phosphate synthase (267 aa).

This sequence belongs to the TrpC family.

It carries out the reaction 1-(2-carboxyphenylamino)-1-deoxy-D-ribulose 5-phosphate + H(+) = (1S,2R)-1-C-(indol-3-yl)glycerol 3-phosphate + CO2 + H2O. Its pathway is amino-acid biosynthesis; L-tryptophan biosynthesis; L-tryptophan from chorismate: step 4/5. The protein is Indole-3-glycerol phosphate synthase of Polynucleobacter asymbioticus (strain DSM 18221 / CIP 109841 / QLW-P1DMWA-1) (Polynucleobacter necessarius subsp. asymbioticus).